Here is an 85-residue protein sequence, read N- to C-terminus: Small ribosomal subunit protein eS21 (85 aa).

Belongs to the eukaryotic ribosomal protein eS21 family. In terms of assembly, component of the 40S small ribosomal subunit.

The protein localises to the cytoplasm. Its subcellular location is the cytosol. The protein resides in the rough endoplasmic reticulum. The polypeptide is Small ribosomal subunit protein eS21 (RPS21) (Branchiostoma belcheri (Amphioxus)).